Here is a 198-residue protein sequence, read N- to C-terminus: Elongation factor Ts (198 aa).

The involved in Mg(2+) ion dislocation from EF-Tu stretch occupies residues 81–84; the sequence is TDFV.

Belongs to the EF-Ts family.

It localises to the cytoplasm. Associates with the EF-Tu.GDP complex and induces the exchange of GDP to GTP. It remains bound to the aminoacyl-tRNA.EF-Tu.GTP complex up to the GTP hydrolysis stage on the ribosome. This is Elongation factor Ts from Pseudothermotoga lettingae (strain ATCC BAA-301 / DSM 14385 / NBRC 107922 / TMO) (Thermotoga lettingae).